A 101-amino-acid polypeptide reads, in one-letter code: Multivesicular body sorting factor 12 (101 aa).

M1 is modified (N-acetylmethionine). S94 carries the phosphoserine modification.

In terms of assembly, component of the ESCRT-I complex (endosomal sorting complex required for transport I) which consists of STP22, VPS28, SRN2 and MVB12 in a 1:1:1:1 stoichiometry. Interacts with STP22 and SRN2.

Its subcellular location is the cytoplasm. The protein resides in the endosome. It localises to the late endosome membrane. Its function is as follows. Component of the ESCRT-I complex, a regulator of vesicular trafficking process. Binds to ubiquitinated cargo proteins and is required for the sorting of endocytic ubiquitinated cargos into multivesicular bodies (MVBs). Appears to be involved in cargo sorting and release of the ESCRT-I complex from the MVBs. The sequence is that of Multivesicular body sorting factor 12 (MVB12) from Saccharomyces cerevisiae (strain ATCC 204508 / S288c) (Baker's yeast).